The chain runs to 815 residues: MYKSVSETRHPLQSEEQEVGIDPLFSYSNKTRGDLSQNGRGSNSTLDTEGTFNSYMKEWEELFVNNNYLATVRQKGINGQLRSSRFRSICWKLFLCVLPQDKSQWISKIKELRAWYSSIKEIHITNPRKAAGQQDLMINNPLSQDEGSLWNKFFQDKELRSMIEQDVKRTFPEMQFFQQENVRKILTDVLFCYARENEQLLYKQGMHELLAPIIFTLHCDHQAFLHASESAQPSEEMKTLLNPEYLEHDAYAMFSQLMETAEPWFSTFEHDGQKGKETLMAPIPFARPQDLGPTVAIVTKVNQIQDHLLKKHDIELYMHLNRLEIAPQIYGLRWVRLLFGREFPLQDLLVVWDALFADSLNLSLVDYVFTAMLLYIRDALISSNYQTCLGLLMHYPIIGDIHSLILKALFLRDPKRNPRPATYQFHPNLDYYKARGADLMNKSRTNARGAPLNIHKVSNSLINFGRKLISPASAPGSMGGPVPGNNSSSSFSAAIPTRTSTEAPRHHLLQQQQQQQHQQQQQQQPQQQQQQHQQQQQQQRLMKSESMPVQLNKGQSSKTISSSPSIESLPGGREFTGSPPPSATKKDSFFSNIARSRSHSKTMGRKESEEELEAQISFLQGQLNDLDAMCKYCAKVMDMHLVNIQDVVLQENLEKEDQILVSLAGLKQIKDILKGSLRFNQSQLEAGENEQITIADDHYCSSGQDQGSQVPRAAKQASSEMPGCTGGTTPDDFILVSKEDEGHRARGAFSGQAQPLLTLRSTSGKSRAPACSPLLFSDPLMGPASASASSSNPSSSPDDDSSKESGFTIVSPLDI.

Serine 44 bears the Phosphoserine mark. Residues 56–64 form a required for interaction with retromer; involved in interaction with ATG8 family proteins region; the sequence is MKEWEELFV. The LIR 1 motif lies at 57-62; the sequence is KEWEEL. The region spanning 81 to 359 is the Rab-GAP TBC domain; that stretch reads LRSSRFRSIC…VVWDALFADS (279 aa). Arginine 448 carries the post-translational modification Asymmetric dimethylarginine; alternate. Omega-N-methylarginine; alternate is present on arginine 448. Residue serine 460 is modified to Phosphoserine. Residues 475-591 form a disordered region; sequence PGSMGGPVPG…SATKKDSFFS (117 aa). Composition is skewed to low complexity over residues 483-492 and 510-539; these read PGNNSSSSFS and QQQQ…QQQQ. Phosphoserine is present on residues serine 546, serine 563, serine 565, serine 568, serine 578, and serine 608. Positions 556–568 are enriched in low complexity; sequence SSKTISSSPSIES. Disordered stretches follow at residues 702-733 and 754-815; these read SGQD…PDDF and QPLL…PLDI. Positions 754–765 are enriched in polar residues; the sequence is QPLLTLRSTSGK. Residues 783–796 are compositionally biased toward low complexity; sequence PASASASSSNPSSS. Residues 805–809 carry the LIR 2 motif; that stretch reads SGFTI. The required for interaction with ATG8 family proteins stretch occupies residues 806–811; it reads GFTIVS. Residue serine 811 is modified to Phosphoserine.

Interacts with MAP1LC3A, MAP1LC3B, MAP1LC3C, GABARAP, GABARAPL1, GABARAPL2. Interacts with VPS29 and VPS35; indicative for an association with retromer CSC subcomplex. MAP1LC3A and VPS29 compete for binding to TBC1D5. Interacts with AP2M1; indicative for an association with the AP2 complex. Interacts with ULK1 and ATG13 (phosphorylated); indicative for an association with the activated ULK1-ATG13-FIP200 complex. Interacts with ATG9A; the interactions seems to be restricted to the AP2-clathrin-associated fraction of ATG9A.

Its subcellular location is the endosome membrane. The protein localises to the cytoplasmic vesicle. It is found in the autophagosome. May act as a GTPase-activating protein for Rab family protein(s). May act as a GAP for RAB7A. Can displace RAB7A and retromer CSC subcomplex from the endosomal membrane to the cytosol; at least retromer displacement seems to require its catalytic activity. Required for retrograde transport of cargo proteins from endosomes to the trans-Golgi network (TGN); the function seems to require its catalytic activity. Involved in regulation of autophagy. May act as a molecular switch between endosomal and autophagosomal transport and is involved in reprogramming vesicle trafficking upon autophagy induction. Involved in the trafficking of ATG9A upon activation of autophagy. May regulate the recruitment of ATG9A-AP2-containing vesicles to autophagic membranes. The polypeptide is TBC1 domain family member 5 (Tbc1d5) (Mus musculus (Mouse)).